The primary structure comprises 63 residues: Large ribosomal subunit protein uL29 (63 aa).

This sequence belongs to the universal ribosomal protein uL29 family.

The protein is Large ribosomal subunit protein uL29 of Sulfurovum sp. (strain NBC37-1).